The primary structure comprises 43 residues: Augerpeptide hhe9.2 (43 aa).

An EGF-like domain is found at 2-40; that stretch reads EEVGCFPNVCKNDGNCSIETSTGMTRCQCLEGYTGHVCE. 3 disulfides stabilise this stretch: C6–C28, C11–C30, and C17–C39.

As to expression, expressed by the venom duct.

Its subcellular location is the secreted. This chain is Augerpeptide hhe9.2, found in Hastula hectica (Sea snail).